We begin with the raw amino-acid sequence, 345 residues long: Eukaryotic translation initiation factor 3 subunit F (345 aa).

The MPN domain maps to 30-166 (VVIHPQALFS…TRAYISAPVG (137 aa)). The segment at 308-345 (GGESGNAESGQRGGQRGGKGGRGGQQRTQDRSGEEARA) is disordered. A compositionally biased stretch (gly residues) spans 318 to 331 (QRGGQRGGKGGRGG). Over residues 335 to 345 (TQDRSGEEARA) the composition is skewed to basic and acidic residues.

The protein belongs to the eIF-3 subunit F family. Component of the eukaryotic translation initiation factor 3 (eIF-3) complex.

It is found in the cytoplasm. In terms of biological role, component of the eukaryotic translation initiation factor 3 (eIF-3) complex, which is involved in protein synthesis of a specialized repertoire of mRNAs and, together with other initiation factors, stimulates binding of mRNA and methionyl-tRNAi to the 40S ribosome. The eIF-3 complex specifically targets and initiates translation of a subset of mRNAs involved in cell proliferation. This chain is Eukaryotic translation initiation factor 3 subunit F, found in Aspergillus oryzae (strain ATCC 42149 / RIB 40) (Yellow koji mold).